The following is a 777-amino-acid chain: B3 domain-containing protein REM-like 1 (777 aa).

Positions 97-193 form a DNA-binding region, TF-B3 1; sequence FVTFTLAPVD…TPVLSLCFEE (97 aa). Disordered stretches follow at residues 200–248 and 344–391; these read VGEE…TSPS and KSSS…ESSS. Residues 218 to 243 show a composition bias toward basic and acidic residues; it reads KIVKDDNNKDESSTWKREGNHLRCKD. A DNA-binding region (TF-B3 2) is located at residues 252 to 347; that stretch reads TLTVTITPDS…TPVLSIKSSS (96 aa). A compositionally biased stretch (polar residues) spans 344–368; sequence KSSSGKGQSEFSKESLSIKPSSGNM. The span at 370–388 shows a compositional bias: basic and acidic residues; the sequence is KKVENNREASRKYPPRSRE. 2 DNA-binding regions (TF-B3) span residues 582–676 and 683–777; these read FLTL…RDSS and FLTL…FYTK.

It localises to the nucleus. This chain is B3 domain-containing protein REM-like 1, found in Arabidopsis thaliana (Mouse-ear cress).